The following is a 436-amino-acid chain: MANEGSDPLLQYMISPRLKKPPQLLFPLPEDNEVAIPMPMTPSEFKERLIFGPFSCSPRDSSHFIDSMKQPSPSSSSTAVNNPFSDSSTLDPLLPPPPPQPEPWLSDQTSSHCQGHALHRSKTAPAMAVINDLHHPIRQKDPTETSRSVVRQAFALLVVYLSLGVLIYWLNRDHYVVNQTHPVVDGLYFCIVTMCTIGYGDITPNSVVTKLFSIMFVLVGFGFIDILLSGMVSYVLDLQESYMLDSAKRRDEPEKRRSYIIDVKKGRMRIRLKVALALGVVVLCIAVGVGIMHFIEEIGWLDSFYLSVMSVTTVGYGDRAFKTLPGRLFAAIWLLVSTLAVARAFLYLAEARVDKRNRERAKKVLCETMSVSQFFAADIDNNGCVSKAEYVIYKLKEMEKITDKDILPISKQFDKLDRCSNGKITLLDLLEGGSGD.

Residues 1–148 (MANEGSDPLL…QKDPTETSRS (148 aa)) are Cytoplasmic-facing. The disordered stretch occupies residues 62–117 (SHFIDSMKQPSPSSSSTAVNNPFSDSSTLDPLLPPPPPQPEPWLSDQTSSHCQGHA). Low complexity predominate over residues 71–92 (PSPSSSSTAVNNPFSDSSTLDP). The span at 93–102 (LLPPPPPQPE) shows a compositional bias: pro residues. Residues 149–169 (VVRQAFALLVVYLSLGVLIYW) form a helical membrane-spanning segment. The pore-forming intramembrane region spans 185–204 (DGLYFCIVTMCTIGYGDITP). The helical transmembrane segment at 212 to 232 (FSIMFVLVGFGFIDILLSGMV) threads the bilayer. Residues 233–274 (SYVLDLQESYMLDSAKRRDEPEKRRSYIIDVKKGRMRIRLKV) are Cytoplasmic-facing. The chain crosses the membrane as a helical span at residues 275-295 (ALALGVVVLCIAVGVGIMHFI). Positions 302 to 321 (DSFYLSVMSVTTVGYGDRAF) form an intramembrane region, pore-forming. Residues 328-348 (LFAAIWLLVSTLAVARAFLYL) form a helical membrane-spanning segment. Residues 349–436 (AEARVDKRNR…LDLLEGGSGD (88 aa)) lie on the Cytoplasmic side of the membrane. 2 consecutive EF-hand domains span residues 365–400 (LCET…EMEK) and 404–436 (KDIL…GSGD). Aspartate 378, aspartate 380, asparagine 382, cysteine 384, glutamate 389, aspartate 417, asparagine 421, lysine 423, and aspartate 428 together coordinate Ca(2+).

It belongs to the two pore domain potassium channel (TC 1.A.1.7) family. As to quaternary structure, homodimer. In terms of tissue distribution, expressed in roots, cotyledons, stems, hypocotyls, leaves and flowers. Detected in root tips and in mesophyll cells and guard cells of the leaves.

The protein localises to the vacuole membrane. It is found in the plastid. The protein resides in the chloroplast thylakoid membrane. With respect to regulation, inhibited by barium, but not by tetraethylammonium. Two-pore potassium channel modulating the proton motive force (pmf) necessary to convert photochemical energy into physiological functions. Mediates the potassium efflux from the thylakoid lumen required for the regulation of the transmembrane electrical potential, the enhancement of the pH gradient for ATP synthesis, the regulation of electron flow, and pH-mediated photoprotective responses. Requires calcium for channel activity. In Arabidopsis thaliana (Mouse-ear cress), this protein is Two-pore potassium channel 3.